The primary structure comprises 276 residues: Undecaprenyl-diphosphatase (276 aa).

Helical transmembrane passes span 1–21 (MSWL…FLPV), 39–59 (AGAS…LVYF), 84–104 (YWLG…GLLF), 115–135 (LWLV…AEYY), 188–208 (FGFL…LPDA), 222–242 (QLFV…AWFL), and 253–273 (FVGY…AGVV).

Belongs to the UppP family.

The protein localises to the cell membrane. The catalysed reaction is di-trans,octa-cis-undecaprenyl diphosphate + H2O = di-trans,octa-cis-undecaprenyl phosphate + phosphate + H(+). Catalyzes the dephosphorylation of undecaprenyl diphosphate (UPP). Confers resistance to bacitracin. The polypeptide is Undecaprenyl-diphosphatase (Mycolicibacterium vanbaalenii (strain DSM 7251 / JCM 13017 / BCRC 16820 / KCTC 9966 / NRRL B-24157 / PYR-1) (Mycobacterium vanbaalenii)).